A 541-amino-acid polypeptide reads, in one-letter code: Membrane protein insertase YidC (541 aa).

The next 6 helical transmembrane spans lie at 7–27, 289–309, 356–376, 430–450, 463–483, and 498–518; these read FLIVAIFLSVFLLWDKWGVTH, YLLTVVNPELVIAPGAIVTLP, IIHSWGYSIITLTLLIKLAFY, LPILVQIPVFISLYWVLLEMV, LSAQDPYYILPLIMGVSMFAQ, and IMMALPFVFTIFFLWFPSGLV.

The protein belongs to the OXA1/ALB3/YidC family. Type 1 subfamily. In terms of assembly, interacts with the Sec translocase complex via SecD. Specifically interacts with transmembrane segments of nascent integral membrane proteins during membrane integration.

It localises to the cell inner membrane. Functionally, required for the insertion and/or proper folding and/or complex formation of integral membrane proteins into the membrane. Involved in integration of membrane proteins that insert both dependently and independently of the Sec translocase complex, as well as at least some lipoproteins. Aids folding of multispanning membrane proteins. The polypeptide is Membrane protein insertase YidC (Ruthia magnifica subsp. Calyptogena magnifica).